The chain runs to 239 residues: Ribonuclease PH (239 aa).

Phosphate-binding positions include Arg87 and 125-127 (GTR).

This sequence belongs to the RNase PH family. In terms of assembly, homohexameric ring arranged as a trimer of dimers.

It carries out the reaction tRNA(n+1) + phosphate = tRNA(n) + a ribonucleoside 5'-diphosphate. In terms of biological role, phosphorolytic 3'-5' exoribonuclease that plays an important role in tRNA 3'-end maturation. Removes nucleotide residues following the 3'-CCA terminus of tRNAs; can also add nucleotides to the ends of RNA molecules by using nucleoside diphosphates as substrates, but this may not be physiologically important. Probably plays a role in initiation of 16S rRNA degradation (leading to ribosome degradation) during starvation. The protein is Ribonuclease PH of Acaryochloris marina (strain MBIC 11017).